Reading from the N-terminus, the 381-residue chain is MAKKDYYEVLGLQKGASEDDIKRAYKRLASKHHPDKNQGSKEAEEKFKEINEAYEVLGDDQKRAAYDQYGHAAFEQGGGTGGFGGGFGGADFGDMFGDIFGDIFGGGRGRQRVVRGEDLRYDLEISLEEAVKGTTKDIQINTLAHCDSCGGSGAEKGSKVETCPHCHGSGRIRRQQGFFVSESICPTCHGSGKKIEKPCRSCHGEGRVHKKENLSVKIPAGVDTGNQLRLAGKGAAGENGAPAGDLYVVIHVREHNIFERDGSNLYCEVPISFATAALGGEIEVPTLDGRVKLKIPAETQTGKLFRMRGKGVASTRSGYAGDLICRIVVETPVNLTSEQKELLHKLEESLQGKDLSKHAPKSSGFLDGVKKFFDNLGKSDK.

The J domain maps to 5–70; it reads DYYEVLGLQK…QKRAAYDQYG (66 aa). Residues 133–211 form a CR-type zinc finger; sequence GTTKDIQINT…CHGEGRVHKK (79 aa). Residues C146, C149, C163, C166, C185, C188, C199, and C202 each contribute to the Zn(2+) site. 4 CXXCXGXG motif repeats span residues 146–153, 163–170, 185–192, and 199–206; these read CDSCGGSG, CPHCHGSG, CPTCHGSG, and CRSCHGEG.

Belongs to the DnaJ family. As to quaternary structure, homodimer. Zn(2+) is required as a cofactor.

Its subcellular location is the cytoplasm. Its function is as follows. Participates actively in the response to hyperosmotic and heat shock by preventing the aggregation of stress-denatured proteins and by disaggregating proteins, also in an autonomous, DnaK-independent fashion. Unfolded proteins bind initially to DnaJ; upon interaction with the DnaJ-bound protein, DnaK hydrolyzes its bound ATP, resulting in the formation of a stable complex. GrpE releases ADP from DnaK; ATP binding to DnaK triggers the release of the substrate protein, thus completing the reaction cycle. Several rounds of ATP-dependent interactions between DnaJ, DnaK and GrpE are required for fully efficient folding. Also involved, together with DnaK and GrpE, in the DNA replication of plasmids through activation of initiation proteins. The polypeptide is Chaperone protein DnaJ (Haemophilus influenzae (strain 86-028NP)).